Consider the following 257-residue polypeptide: Gamma-secretase subunit APH-1B (257 aa).

The next 7 membrane-spanning stretches (helical) occupy residues 5–25 (VFFG…VFTI), 32–52 (IIFL…SSLV), 71–91 (LLIF…FAYY), 115–135 (LLAY…SFVN), 158–178 (YSAF…IVFF), 186–206 (WGIL…TFIS), and 213–233 (LASA…AAGG).

It belongs to the APH-1 family. In terms of assembly, probable component of the gamma-secretase complex, a complex composed of a presenilin homodimer (PSEN1 or PSEN2), nicastrin (NCSTN), APH1 (APH1A or APH1B) and PEN2. Such minimal complex is sufficient for secretase activity, although other components may exist. Interacts with PSEN1 and PSEN2. In terms of tissue distribution, weakly or not expressed in leukocytes, lung, placenta, small intestine, liver, kidney, spleen thymus, colon, skeletal muscle, heart and brain.

It is found in the membrane. In terms of biological role, probable subunit of the gamma-secretase complex, an endoprotease complex that catalyzes the intramembrane cleavage of integral proteins such as Notch receptors and APP (amyloid-beta precursor protein). It probably represents a stabilizing cofactor for the presenilin homodimer that promotes the formation of a stable complex. Probably present in a minority of gamma-secretase complexes compared to APH1A. The sequence is that of Gamma-secretase subunit APH-1B (APH1B) from Homo sapiens (Human).